Consider the following 322-residue polypeptide: Eukaryotic translation initiation factor 3 subunit I (322 aa).

5 WD repeats span residues 4-43, 46-85, 141-180, 184-223, and 281-322; these read GHERSITQIKYNREGDLLFSSSKDQKPNVWYSLNGERLGT, GHQGAVWCLDVDWESRKLITAGGDMTAKLWDVEYGTVIAS, MTESKITSMLWGPLDETIITGHDNGNIAIWDVRKGQKVVD, DHTGVINDMQLSKDGTMFVTASKDATAKLFDSETLMCLKT, and GHFG…NIFE.

The protein belongs to the eIF-3 subunit I family. Component of the eukaryotic translation initiation factor 3 (eIF-3) complex. The eIF-3 complex interacts with pix.

The protein resides in the cytoplasm. Its function is as follows. Component of the eukaryotic translation initiation factor 3 (eIF-3) complex, which is involved in protein synthesis of a specialized repertoire of mRNAs and, together with other initiation factors, stimulates binding of mRNA and methionyl-tRNAi to the 40S ribosome. The eIF-3 complex specifically targets and initiates translation of a subset of mRNAs involved in cell proliferation. The sequence is that of Eukaryotic translation initiation factor 3 subunit I from Drosophila willistoni (Fruit fly).